We begin with the raw amino-acid sequence, 272 residues long: Acetylglutamate kinase (272 aa).

Substrate-binding positions include 46 to 47, Arg68, and Asn166; that span reads GA.

It belongs to the acetylglutamate kinase family. ArgB subfamily.

It is found in the cytoplasm. It carries out the reaction N-acetyl-L-glutamate + ATP = N-acetyl-L-glutamyl 5-phosphate + ADP. It participates in amino-acid biosynthesis; L-arginine biosynthesis; N(2)-acetyl-L-ornithine from L-glutamate: step 2/4. Functionally, catalyzes the ATP-dependent phosphorylation of N-acetyl-L-glutamate. This chain is Acetylglutamate kinase, found in Dehalococcoides mccartyi (strain ATCC BAA-2100 / JCM 16839 / KCTC 5957 / BAV1).